The primary structure comprises 331 residues: Malate dehydrogenase (331 aa).

14–20 (GAAGSIG) is a binding site for NAD(+). Arginine 95 and arginine 101 together coordinate substrate. NAD(+) contacts are provided by residues asparagine 108, glutamine 115, and 132 to 134 (VGN). Substrate-binding residues include asparagine 134 and arginine 165. Histidine 190 serves as the catalytic Proton acceptor.

This sequence belongs to the LDH/MDH superfamily. MDH type 2 family.

It catalyses the reaction (S)-malate + NAD(+) = oxaloacetate + NADH + H(+). Functionally, catalyzes the reversible oxidation of malate to oxaloacetate. The sequence is that of Malate dehydrogenase from Rhodococcus opacus (strain B4).